The following is a 702-amino-acid chain: NAD(P)H-quinone oxidoreductase subunit 5, chloroplastic (702 aa).

15 helical membrane-spanning segments follow: residues W1 to I21, I31 to S51, I81 to I101, F117 to I137, I139 to T159, G177 to F197, N211 to A231, T250 to A270, L272 to I292, L319 to I339, A346 to S366, T388 to S408, W417 to Y437, L534 to F554, and S602 to F622.

This sequence belongs to the complex I subunit 5 family. As to quaternary structure, NDH is composed of at least 16 different subunits, 5 of which are encoded in the nucleus.

The protein localises to the plastid. It localises to the chloroplast thylakoid membrane. The catalysed reaction is a plastoquinone + NADH + (n+1) H(+)(in) = a plastoquinol + NAD(+) + n H(+)(out). It catalyses the reaction a plastoquinone + NADPH + (n+1) H(+)(in) = a plastoquinol + NADP(+) + n H(+)(out). Its function is as follows. NDH shuttles electrons from NAD(P)H:plastoquinone, via FMN and iron-sulfur (Fe-S) centers, to quinones in the photosynthetic chain and possibly in a chloroplast respiratory chain. The immediate electron acceptor for the enzyme in this species is believed to be plastoquinone. Couples the redox reaction to proton translocation, and thus conserves the redox energy in a proton gradient. The sequence is that of NAD(P)H-quinone oxidoreductase subunit 5, chloroplastic (ndhF) from Poa pratensis (Kentucky bluegrass).